The sequence spans 159 residues: Peptide methionine sulfoxide reductase MsrB (159 aa).

Residues 14 to 137 enclose the MsrB domain; it reads TEKLKENLTE…NSASLKFIAK (124 aa). Cys-126 serves as the catalytic Nucleophile.

It belongs to the MsrB Met sulfoxide reductase family.

It carries out the reaction L-methionyl-[protein] + [thioredoxin]-disulfide + H2O = L-methionyl-(R)-S-oxide-[protein] + [thioredoxin]-dithiol. The sequence is that of Peptide methionine sulfoxide reductase MsrB from Hathewaya histolytica (Clostridium histolyticum).